The primary structure comprises 97 residues: Large ribosomal subunit protein uL30m (97 aa).

This sequence belongs to the universal ribosomal protein uL30 family. In terms of assembly, component of the mitochondrial large ribosomal subunit (mt-LSU). Mature yeast 74S mitochondrial ribosomes consist of a small (37S) and a large (54S) subunit. The 37S small subunit contains a 15S ribosomal RNA (15S mt-rRNA) and at least 32 different proteins. The 54S large subunit contains a 21S rRNA (21S mt-rRNA) and at least 45 different proteins.

Its subcellular location is the mitochondrion. In terms of biological role, component of the mitochondrial ribosome (mitoribosome), a dedicated translation machinery responsible for the synthesis of mitochondrial genome-encoded proteins, including at least some of the essential transmembrane subunits of the mitochondrial respiratory chain. The mitoribosomes are attached to the mitochondrial inner membrane and translation products are cotranslationally integrated into the membrane. The polypeptide is Large ribosomal subunit protein uL30m (mrpl33) (Schizosaccharomyces pombe (strain 972 / ATCC 24843) (Fission yeast)).